A 110-amino-acid polypeptide reads, in one-letter code: Phosphoribosyl-ATP pyrophosphatase (110 aa).

The protein belongs to the PRA-PH family.

The protein resides in the cytoplasm. It carries out the reaction 1-(5-phospho-beta-D-ribosyl)-ATP + H2O = 1-(5-phospho-beta-D-ribosyl)-5'-AMP + diphosphate + H(+). The protein operates within amino-acid biosynthesis; L-histidine biosynthesis; L-histidine from 5-phospho-alpha-D-ribose 1-diphosphate: step 2/9. The protein is Phosphoribosyl-ATP pyrophosphatase of Pseudomonas fluorescens (strain ATCC BAA-477 / NRRL B-23932 / Pf-5).